A 214-amino-acid chain; its full sequence is Ras-related protein RABA5c (214 aa).

19–26 contributes to the GTP binding site; the sequence is GDSAVGKS. Positions 41 to 49 match the Effector region motif; the sequence is SKATIGVEF. GTP is bound by residues 67–71, 125–128, and 155–156; these read DTAGQ, NKCD, and SA. Residues cysteine 211 and cysteine 212 are each lipidated (S-geranylgeranyl cysteine).

It belongs to the small GTPase superfamily. Rab family. As to quaternary structure, interacts (via C-terminus) with GDI1. Interacts with PUX8/SAY1. Expressed in roots and actively dividing cells.

It is found in the golgi apparatus membrane. Its subcellular location is the golgi apparatus. The protein resides in the trans-Golgi network membrane. It localises to the cell membrane. In terms of biological role, intracellular vesicle trafficking and protein transport. Binds GTP and GDP and possesses intrinsic GTPase activity. The protein is Ras-related protein RABA5c (RABA5C) of Arabidopsis thaliana (Mouse-ear cress).